The following is a 298-amino-acid chain: Nucleotide-binding protein MLBr00563 (298 aa).

Gly21–Gly28 contacts ATP. A GTP-binding site is contributed by Asp72–Ser75.

This sequence belongs to the RapZ-like family.

In terms of biological role, displays ATPase and GTPase activities. The sequence is that of Nucleotide-binding protein MLBr00563 from Mycobacterium leprae (strain Br4923).